The primary structure comprises 420 residues: UDP-glucuronic acid decarboxylase 1 (420 aa).

Met1 bears the N-acetylmethionine mark. Over 1-19 (MVSKALLRLVSAVNRRRMK) the chain is Cytoplasmic. A helical; Signal-anchor for type II membrane protein membrane pass occupies residues 20–40 (LLLGIALLAYVASVWGNFVNM). Residues 41 to 420 (RSIQENGELK…RIKKGRTRHN (380 aa)) are Lumenal-facing. Thr94 bears the Phosphothreonine mark. Residues Gly98, Phe99, Val100, Asp119, Asn120, Phe122, Thr123, Gly124, Asp144, and Val145 each contribute to the NAD(+) site. UDP-alpha-D-glucuronate contacts are provided by Leu149 and Tyr150. The NAD(+) site is built by Leu159 and Ser161. Lys177 is a binding site for UDP-alpha-D-glucuronate. NAD(+) is bound at residue Thr178. UDP-alpha-D-glucuronate contacts are provided by Asn185, Gly188, Lys191, and Arg192. Positions 200, 231, and 235 each coordinate NAD(+). Tyr231 functions as the Proton acceptor in the catalytic mechanism. UDP-alpha-D-glucuronate contacts are provided by Tyr245, Gln248, and Glu249. NAD(+) is bound by residues Thr261, His267, and Arg272. Asn316 is a glycosylation site (N-linked (GlcNAc...) asparagine).

This sequence belongs to the NAD(P)-dependent epimerase/dehydratase family. UDP-glucuronic acid decarboxylase subfamily. As to quaternary structure, homodimer and homotetramer. Interacts with AKT1. NAD(+) is required as a cofactor.

Its subcellular location is the golgi apparatus. It is found in the golgi stack membrane. It carries out the reaction UDP-alpha-D-glucuronate + H(+) = UDP-alpha-D-xylose + CO2. Its pathway is nucleotide-sugar biosynthesis; UDP-alpha-D-xylose biosynthesis; UDP-alpha-D-xylose from UDP-alpha-D-glucuronate: step 1/1. Functionally, catalyzes the NAD-dependent decarboxylation of UDP-glucuronic acid to UDP-xylose. Necessary for the biosynthesis of the core tetrasaccharide in glycosaminoglycan biosynthesis. The protein is UDP-glucuronic acid decarboxylase 1 (UXS1) of Pongo abelii (Sumatran orangutan).